We begin with the raw amino-acid sequence, 268 residues long: Short chain dehydrogenase/reductase dpchG (268 aa).

6 residues coordinate NADP(+): Val-18, Asp-70, Asn-97, Lys-131, Tyr-165, and Lys-169. Tyr-165 (proton acceptor) is an active-site residue. Lys-169 serves as the catalytic Lowers pKa of active site Tyr.

It belongs to the short-chain dehydrogenases/reductases (SDR) family.

The protein operates within secondary metabolite biosynthesis; terpenoid biosynthesis. Its function is as follows. Short chain dehydrogenase/reductase; part of the gene cluster that mediates the biosynthesis of the diterpenoid pyrones higginsianins A and B. The first step of the pathway is the synthesis of the alpha-pyrone moiety by the polyketide synthase dpchA via condensation of one acetyl-CoA starter unit with 3 malonyl-CoA units and 2 methylations. The alpha-pyrone is then combined with geranylgeranyl pyrophosphate (GGPP) formed by the GGPP synthase dpchD through the action of the prenyltransferase dpchC to yield a linear alpha-pyrone diterpenoid. Subsequent steps in the diterpenoid pyrone biosynthetic pathway involve the decalin core formation, which is initiated by the epoxidation of the C10-C11 olefin by the FAD-dependent oxidoreductase dpchE, and is followed by a cyclization cascade catalyzed by the terpene cyclase dpchB. The short chain dehydrogenase/reductase dpchG then oxidizes the 8S hydroxy group to a ketone and the short chain dehydrogenase/reductase dpchH reduces the ketone to the 8R hydroxy group to yield higginsianin B. Finally, the FAD-dependent oxidoreductase dpchF converts higginsianin B into higginsianin A. The polypeptide is Short chain dehydrogenase/reductase dpchG (Colletotrichum higginsianum (strain IMI 349063) (Crucifer anthracnose fungus)).